The following is a 443-amino-acid chain: tRNA modification GTPase MnmE (443 aa).

Residues Arg23, Glu80, and Lys120 each coordinate (6S)-5-formyl-5,6,7,8-tetrahydrofolate. In terms of domain architecture, TrmE-type G spans 217 to 367; it reads GFEVVILGAP…LLAEIGRRAA (151 aa). GTP is bound by residues 227 to 232, 246 to 252, and 271 to 274; these read NAGKSS, TDEPGTT, and DTAG. Ser231 and Thr252 together coordinate Mg(2+). (6S)-5-formyl-5,6,7,8-tetrahydrofolate is bound at residue Lys443.

It belongs to the TRAFAC class TrmE-Era-EngA-EngB-Septin-like GTPase superfamily. TrmE GTPase family. In terms of assembly, homodimer. Heterotetramer of two MnmE and two MnmG subunits. K(+) serves as cofactor.

The protein localises to the cytoplasm. Functionally, exhibits a very high intrinsic GTPase hydrolysis rate. Involved in the addition of a carboxymethylaminomethyl (cmnm) group at the wobble position (U34) of certain tRNAs, forming tRNA-cmnm(5)s(2)U34. The polypeptide is tRNA modification GTPase MnmE (Mesorhizobium japonicum (strain LMG 29417 / CECT 9101 / MAFF 303099) (Mesorhizobium loti (strain MAFF 303099))).